We begin with the raw amino-acid sequence, 401 residues long: Probable tRNA sulfurtransferase (401 aa).

The 106-residue stretch at 60 to 165 (EPIIDKLKTV…QDGTYVTCHD (106 aa)) folds into the THUMP domain. ATP-binding positions include 183 to 184 (ML), 208 to 209 (HF), Arg-265, Gly-287, and Gln-296.

This sequence belongs to the ThiI family.

Its subcellular location is the cytoplasm. It carries out the reaction [ThiI sulfur-carrier protein]-S-sulfanyl-L-cysteine + a uridine in tRNA + 2 reduced [2Fe-2S]-[ferredoxin] + ATP + H(+) = [ThiI sulfur-carrier protein]-L-cysteine + a 4-thiouridine in tRNA + 2 oxidized [2Fe-2S]-[ferredoxin] + AMP + diphosphate. The catalysed reaction is [ThiS sulfur-carrier protein]-C-terminal Gly-Gly-AMP + S-sulfanyl-L-cysteinyl-[cysteine desulfurase] + AH2 = [ThiS sulfur-carrier protein]-C-terminal-Gly-aminoethanethioate + L-cysteinyl-[cysteine desulfurase] + A + AMP + 2 H(+). The protein operates within cofactor biosynthesis; thiamine diphosphate biosynthesis. Its function is as follows. Catalyzes the ATP-dependent transfer of a sulfur to tRNA to produce 4-thiouridine in position 8 of tRNAs, which functions as a near-UV photosensor. Also catalyzes the transfer of sulfur to the sulfur carrier protein ThiS, forming ThiS-thiocarboxylate. This is a step in the synthesis of thiazole, in the thiamine biosynthesis pathway. The sulfur is donated as persulfide by IscS. This Geobacillus thermodenitrificans (strain NG80-2) protein is Probable tRNA sulfurtransferase.